The chain runs to 643 residues: Complement component C1q receptor (643 aa).

The signal sequence occupies residues 1–23; the sequence is MVTSTGLLLLLGLLGQLWAGAAA. Residues 24–571 are Extracellular-facing; the sequence is DSEAVVCEGT…HSDSDTDGQK (548 aa). In terms of domain architecture, C-type lectin spans 31–173; that stretch reads EGTACYTAHW…CGTPDAPGNS (143 aa). 16 disulfide bridges follow: C140-C164, C261-C272, C268-C282, C284-C297, C303-C314, C308-C325, C327-C340, C346-C355, C351-C364, C366-C380, C386-C397, C393-C406, C408-C422, C428-C437, C433-C446, and C448-C461. 2 consecutive EGF-like domains span residues 257-298 and 299-341; these read PKFG…VTCA and SRNP…VHCV. Residue N322 is glycosylated (N-linked (GlcNAc...) asparagine). Residues 342-381 enclose the EGF-like 3; calcium-binding domain; sequence DIDECEDSPCDQECINTPGGFHCECWVGYQSSGSKEEACE. One can recognise an EGF-like 4; calcium-binding domain in the interval 382–423; that stretch reads DVDECTAAYSPCAQGCTNTDGSFYCSCKEGYIMSGEDSTQCE. Residues 424–462 enclose the EGF-like 5; calcium-binding domain; the sequence is DIDECLGNPCDTLCINTDGSFRCGCPAGFELAPNGVSCT. Positions 469–517 are disordered; sequence ELPARPPQKEDKGDGKESTVPLTEMPGSLNGSKDVSNRAQTTDLSIQSD. Residues 475-485 are compositionally biased toward basic and acidic residues; that stretch reads PQKEDKGDGKE. Positions 497-517 are enriched in polar residues; sequence LNGSKDVSNRAQTTDLSIQSD. N-linked (GlcNAc...) asparagine glycosylation occurs at N498. The chain crosses the membrane as a helical span at residues 572–592; the sequence is LLLFYILGTVVAISLLLALAL. At 593 to 643 the chain is on the cytoplasmic side; it reads GLLIYLKRKAKKEEIKEKKAQNAADSYSWIPERAESRAPENQYSPTPGTDC. A disordered region spans residues 606–643; it reads EIKEKKAQNAADSYSWIPERAESRAPENQYSPTPGTDC. Position 618 is a phosphoserine (S618). Residues Y619 and Y635 each carry the phosphotyrosine modification. Over residues 631 to 643 the composition is skewed to polar residues; it reads PENQYSPTPGTDC.

As to quaternary structure, homodimer. Interacts with C1QBP; the association may represent a cell surface C1q receptor. Interacts with surfactant protein A/SFTPA1. Interacts with multimerin-2/MMRN2. Interacts with DAG1; this interaction plays an important role in endothelial cell migration. Interacts with CBL. Interacts with IGFBP7. Interacts with VEGFR2. N- and O-glycosylated. In terms of processing, phosphorylated on Tyr-619 and Tyr-635 by SRC; these phosphorylations promote endothelial cell adhesion and migration. In terms of tissue distribution, widely expressed. Highly expressed in lung and heart. Expressed at lower level in brain, thymus, liver, spleen, intestine, kidney, adrenal gland, muscle and testis. Expressed on endothelial cells, platelets, undifferentiated monocytes and circulating natural killer cells.

It is found in the cell membrane. In terms of biological role, cell surface receptor that plays a role in various physiological processes including inflammation, phagocytosis, and cell adhesion. Plays a role in phagocytosis and enhances the uptake of apoptotic cells and immune complexes by acting as a receptor for defense collagens including surfactant protein A/SFTPA1, C1q, and mannose-binding lectin (MBL2). Plays a role in the regulation of endothelial cell function and adhesion by activating angiogenesis. Mechanistically, exerts its angiogenic function by associating with beta-dystroglycan, leading to SRC-dependent phosphorylation and subsequent recruitment of CBL. In turn, CBL provides a docking site for downstream signaling components, such as CRKL to enhance cell migration. Participates in angiogenesis also by acting as a receptor for the ECM pan-endothelial glycoprotein multimerin-2/MMRN2 and IGFBP7 ligands. Both ligands play a non-redundant role in CD93-mediated endothelial cell function. Acts as a key regulator of endothelial barrier function through modulating VEGFR2 function. The protein is Complement component C1q receptor (Cd93) of Rattus norvegicus (Rat).